Consider the following 247-residue polypeptide: LHFPL tetraspan subfamily member 4 protein (247 aa).

A run of 4 helical transmembrane segments spans residues 22-42, 97-117, 127-147, and 178-198; these read IGVLWAIFTICFAIINVVVFI, FFVLLSMVLILGCITCFALFF, ICAWMQLLAALCLVLGCMIFP, and ILAIIGILNALILSFLAFVLG.

Belongs to the LHFP family. In terms of assembly, interacts with GABA(A) receptor subunits. Interacts with GABRB3. Interacts with GABRA2. Interacts with GABRG2. Interacts with GABRA1. Identified in a complex of 720 kDa composed of LHFPL4, NLGN2, GABRA1, GABRB2, GABRG2 and GABRB3. Interacts with NLGN2; leading to mutual regulation of protein level and synaptic clustering. In terms of tissue distribution, highly expressed in the brain, including the cortex, hippocampus, midbrain, olfactory bulb pona plus medulla (at protein level). Expressed in the in the cerebellar granular layer and in granular layer. Colocalized with GPHN at inhibitory synapses. Weakly expressed in heart, testis, lung, intestine, vagina, ovary and uterus.

It localises to the cell projection. The protein resides in the dendrite. It is found in the postsynaptic cell membrane. Plays a role in the regulation of inhibitory synapse formation and function by being involved in maintening gamma-aminobutyric acid receptors (GABAARs) clustering and their associated scaffold proteins at inhibitory synaptic sites. Acts in concert with NLGN2 to recruit or stabilize GABAARs. This is LHFPL tetraspan subfamily member 4 protein from Mus musculus (Mouse).